Consider the following 651-residue polypeptide: Probable inactive purple acid phosphatase 9 (651 aa).

The first 20 residues, 1 to 20, serve as a signal peptide directing secretion; sequence MIAAVYTLFFFFLLISSVYS. N-linked (GlcNAc...) asparagine glycosylation is found at N32, N96, and N202. Fe cation is bound by residues D305 and Y308. Residue D305 participates in Zn(2+) binding. Zn(2+) is bound at residue N338. Substrate is bound at residue N338. 2 N-linked (GlcNAc...) asparagine glycosylation sites follow: N378 and N432. Residue H444 participates in Zn(2+) binding. N-linked (GlcNAc...) asparagine glycosylation is present at N475. H483 is a binding site for Zn(2+). A substrate-binding site is contributed by 483 to 485; that stretch reads HVH. H485 contacts Fe cation. N-linked (GlcNAc...) asparagine glycosylation is found at N495 and N640.

Belongs to the metallophosphoesterase superfamily. Purple acid phosphatase family. As to quaternary structure, homodimer. Requires Fe cation as cofactor. It depends on Zn(2+) as a cofactor. In terms of tissue distribution, expressed in roots, stems, leaves, flowers and siliques.

The protein localises to the secreted. This is Probable inactive purple acid phosphatase 9 (PAP9) from Arabidopsis thaliana (Mouse-ear cress).